Consider the following 308-residue polypeptide: Transaldolase (308 aa).

Lys125 acts as the Schiff-base intermediate with substrate in catalysis.

It belongs to the transaldolase family. Type 1 subfamily. As to quaternary structure, homodimer.

Its subcellular location is the cytoplasm. The catalysed reaction is D-sedoheptulose 7-phosphate + D-glyceraldehyde 3-phosphate = D-erythrose 4-phosphate + beta-D-fructose 6-phosphate. The protein operates within carbohydrate degradation; pentose phosphate pathway; D-glyceraldehyde 3-phosphate and beta-D-fructose 6-phosphate from D-ribose 5-phosphate and D-xylulose 5-phosphate (non-oxidative stage): step 2/3. Its function is as follows. Transaldolase is important for the balance of metabolites in the pentose-phosphate pathway. The polypeptide is Transaldolase (Ectopseudomonas mendocina (strain ymp) (Pseudomonas mendocina)).